The chain runs to 166 residues: Large ribosomal subunit protein uL10 (166 aa).

This sequence belongs to the universal ribosomal protein uL10 family. In terms of assembly, part of the ribosomal stalk of the 50S ribosomal subunit. The N-terminus interacts with L11 and the large rRNA to form the base of the stalk. The C-terminus forms an elongated spine to which L12 dimers bind in a sequential fashion forming a multimeric L10(L12)X complex.

Its function is as follows. Forms part of the ribosomal stalk, playing a central role in the interaction of the ribosome with GTP-bound translation factors. This Shewanella denitrificans (strain OS217 / ATCC BAA-1090 / DSM 15013) protein is Large ribosomal subunit protein uL10.